The sequence spans 377 residues: Queuine tRNA-ribosyltransferase (377 aa).

Asp89 (proton acceptor) is an active-site residue. Substrate-binding positions include 89 to 93, Asp143, Gln187, and Gly214; that span reads DSGGF. An RNA binding region spans residues 245–251; the sequence is GVGKPED. The active-site Nucleophile is the Asp264. The segment at 269–273 is RNA binding; important for wobble base 34 recognition; that stretch reads TRNAR. Positions 302, 304, 307, and 333 each coordinate Zn(2+).

The protein belongs to the queuine tRNA-ribosyltransferase family. Homodimer. Within each dimer, one monomer is responsible for RNA recognition and catalysis, while the other monomer binds to the replacement base PreQ1. Zn(2+) is required as a cofactor.

The enzyme catalyses 7-aminomethyl-7-carbaguanine + guanosine(34) in tRNA = 7-aminomethyl-7-carbaguanosine(34) in tRNA + guanine. It participates in tRNA modification; tRNA-queuosine biosynthesis. Its function is as follows. Catalyzes the base-exchange of a guanine (G) residue with the queuine precursor 7-aminomethyl-7-deazaguanine (PreQ1) at position 34 (anticodon wobble position) in tRNAs with GU(N) anticodons (tRNA-Asp, -Asn, -His and -Tyr). Catalysis occurs through a double-displacement mechanism. The nucleophile active site attacks the C1' of nucleotide 34 to detach the guanine base from the RNA, forming a covalent enzyme-RNA intermediate. The proton acceptor active site deprotonates the incoming PreQ1, allowing a nucleophilic attack on the C1' of the ribose to form the product. After dissociation, two additional enzymatic reactions on the tRNA convert PreQ1 to queuine (Q), resulting in the hypermodified nucleoside queuosine (7-(((4,5-cis-dihydroxy-2-cyclopenten-1-yl)amino)methyl)-7-deazaguanosine). This Shewanella halifaxensis (strain HAW-EB4) protein is Queuine tRNA-ribosyltransferase.